The primary structure comprises 251 residues: Ubiquinone/menaquinone biosynthesis C-methyltransferase UbiE (251 aa).

S-adenosyl-L-methionine contacts are provided by residues threonine 74, aspartate 95, 123 to 124 (NA), and serine 140.

It belongs to the class I-like SAM-binding methyltransferase superfamily. MenG/UbiE family.

The enzyme catalyses a 2-demethylmenaquinol + S-adenosyl-L-methionine = a menaquinol + S-adenosyl-L-homocysteine + H(+). It catalyses the reaction a 2-methoxy-6-(all-trans-polyprenyl)benzene-1,4-diol + S-adenosyl-L-methionine = a 5-methoxy-2-methyl-3-(all-trans-polyprenyl)benzene-1,4-diol + S-adenosyl-L-homocysteine + H(+). The protein operates within quinol/quinone metabolism; menaquinone biosynthesis; menaquinol from 1,4-dihydroxy-2-naphthoate: step 2/2. It functions in the pathway cofactor biosynthesis; ubiquinone biosynthesis. Methyltransferase required for the conversion of demethylmenaquinol (DMKH2) to menaquinol (MKH2) and the conversion of 2-polyprenyl-6-methoxy-1,4-benzoquinol (DDMQH2) to 2-polyprenyl-3-methyl-6-methoxy-1,4-benzoquinol (DMQH2). In Klebsiella pneumoniae (strain 342), this protein is Ubiquinone/menaquinone biosynthesis C-methyltransferase UbiE.